A 363-amino-acid chain; its full sequence is 3-isopropylmalate dehydrogenase (363 aa).

Residue 78 to 91 (GKKWDYLPIESRPE) coordinates NAD(+). Residues Arg99, Arg109, Arg138, and Asp227 each contribute to the substrate site. Residues Asp227, Asp251, and Asp255 each coordinate Mg(2+). Position 285-297 (285-297 (GSAPDIEGKNIAN)) interacts with NAD(+).

The protein belongs to the isocitrate and isopropylmalate dehydrogenases family. LeuB type 1 subfamily. In terms of assembly, homodimer. Mg(2+) is required as a cofactor. It depends on Mn(2+) as a cofactor.

The protein localises to the cytoplasm. It carries out the reaction (2R,3S)-3-isopropylmalate + NAD(+) = 4-methyl-2-oxopentanoate + CO2 + NADH. It participates in amino-acid biosynthesis; L-leucine biosynthesis; L-leucine from 3-methyl-2-oxobutanoate: step 3/4. Catalyzes the oxidation of 3-carboxy-2-hydroxy-4-methylpentanoate (3-isopropylmalate) to 3-carboxy-4-methyl-2-oxopentanoate. The product decarboxylates to 4-methyl-2 oxopentanoate. The polypeptide is 3-isopropylmalate dehydrogenase (leuB) (Buchnera aphidicola subsp. Rhopalosiphum padi).